Reading from the N-terminus, the 208-residue chain is WEB family protein At2g17940 (208 aa).

Residues 78 to 113 (RTLQLNTSLSNRIKTLTQELELGKKEIQRLSRTRSS) adopt a coiled-coil conformation.

Belongs to the WEB family.

The chain is WEB family protein At2g17940 from Arabidopsis thaliana (Mouse-ear cress).